The following is a 192-amino-acid chain: uncharacterized protein (192 aa).

Residues 29-160 (HRQAAVLIPI…PLDIYRRGDS (132 aa)) form the Nudix hydrolase domain. Positions 67–89 (GAVDDTDASVIAAALREAEEEVA) match the Nudix box motif. Residues E83 and E87 each coordinate Mg(2+).

The protein belongs to the Nudix hydrolase family. PCD1 subfamily. Requires Mn(2+) as cofactor. Mg(2+) serves as cofactor.

Functionally, probably mediates the hydrolysis of some nucleoside diphosphate derivatives. This is an uncharacterized protein from Shigella boydii serotype 4 (strain Sb227).